Here is a 578-residue protein sequence, read N- to C-terminus: Acyl-CoA synthetase ACTT5 (578 aa).

211–222 contacts AMP; it reads RLTTSGTTGLPK. The interval 472-551 is AMP-binding; the sequence is ELEAALLQAK…DEIPRSPTGK (80 aa).

It belongs to the ATP-dependent AMP-binding enzyme family.

Its pathway is mycotoxin biosynthesis. Functionally, acyl-CoA synthetase; part of the gene clusters that mediate the biosynthesis of the host-selective toxins (HSTs) ACT-toxins responsible for brown spot of tangerine disease by the tangerine pathotype which affects tangerines and mandarins. ACT-toxins consist of three moieties, 9,10-epoxy-8-hydroxy-9-methyl-decatrienoic acid (EDA), valine and a polyketide. ACT-toxin I is toxic to both citrus and pear; toxin II the 5''-deoxy derivative of ACT-toxin I, is highly toxic to pear and slightly toxic to citrus. On cellular level, ACT-toxins affect plasma membrane of susceptible cells and cause a sudden increase in loss of K(+) after a few minutes of toxin treatment. The acyl-CoA ligase ACTT1, the hydrolase ACTT2, the enoyl-CoA hydratases ACTT3 and ACTT6, and the acyl-CoA synthetase ACTT5 are all involved in the biosynthesis of the AK-, AF- and ACT-toxin common 9,10-epoxy-8-hydroxy-9-methyl-decatrienoic acid (EDA) structural moiety. The exact role of each enzyme, and of additional enzymes identified within the AF-toxin clusters have still to be determined. On the other hand, ACTTS1 to ACTTS4 are specific to the tangerine pathotype. The function of ACTTS3 is to elongate the polyketide chain portion of ACT-toxin that is unique to this toxin. The enoyl-reductase ACTTS2 might complement the missing enoyl-reductase (ER) domain in ACTTS3 in the synthesis of the polyketide portion of ACT-toxin. The roles of the nonribosomal peptide synthetases-related proteins ACTTS1 and ACTTS4 have also still not been elucidated. This Alternaria alternata (Alternaria rot fungus) protein is Acyl-CoA synthetase ACTT5.